The sequence spans 442 residues: D-serine dehydratase (442 aa).

An N6-(pyridoxal phosphate)lysine modification is found at lysine 118.

Belongs to the serine/threonine dehydratase family. DsdA subfamily. Monomer. Pyridoxal 5'-phosphate is required as a cofactor.

The catalysed reaction is D-serine = pyruvate + NH4(+). The sequence is that of D-serine dehydratase from Escherichia coli O6:H1 (strain CFT073 / ATCC 700928 / UPEC).